A 169-amino-acid polypeptide reads, in one-letter code: Crossover junction endodeoxyribonuclease RuvC (169 aa).

Catalysis depends on residues Asp-15, Glu-75, and Asp-147. Residues Asp-15, Glu-75, and Asp-147 each coordinate Mg(2+).

The protein belongs to the RuvC family. As to quaternary structure, homodimer which binds Holliday junction (HJ) DNA. The HJ becomes 2-fold symmetrical on binding to RuvC with unstacked arms; it has a different conformation from HJ DNA in complex with RuvA. In the full resolvosome a probable DNA-RuvA(4)-RuvB(12)-RuvC(2) complex forms which resolves the HJ. The cofactor is Mg(2+).

It localises to the cytoplasm. It catalyses the reaction Endonucleolytic cleavage at a junction such as a reciprocal single-stranded crossover between two homologous DNA duplexes (Holliday junction).. Its function is as follows. The RuvA-RuvB-RuvC complex processes Holliday junction (HJ) DNA during genetic recombination and DNA repair. Endonuclease that resolves HJ intermediates. Cleaves cruciform DNA by making single-stranded nicks across the HJ at symmetrical positions within the homologous arms, yielding a 5'-phosphate and a 3'-hydroxyl group; requires a central core of homology in the junction. The consensus cleavage sequence is 5'-(A/T)TT(C/G)-3'. Cleavage occurs on the 3'-side of the TT dinucleotide at the point of strand exchange. HJ branch migration catalyzed by RuvA-RuvB allows RuvC to scan DNA until it finds its consensus sequence, where it cleaves and resolves the cruciform DNA. The chain is Crossover junction endodeoxyribonuclease RuvC from Caulobacter vibrioides (strain ATCC 19089 / CIP 103742 / CB 15) (Caulobacter crescentus).